The chain runs to 455 residues: MTTMAAATLLRATPHFSGLAAGRTFLLQGLLRLLKAPALPLLCRGLAVEAKKTYVRDKPHVNVGTIGHVDHGKTTLTAAITKILAEGGGAKFKKYEEIDNAPEERARGITINAAHVEYSTAARHYAHTDCPGHADYVKNMITGTAPLDGCILVVAANDGPMPQTREHLLLARQIGVEHVVVYVNKADAVQDSEMVELVELEIRELLTEFGYKGEETPVIVGSALCALEGRDPELGLKSVQKLLDAVDTYIPVPARDLEKPFLLPVEAVYSVPGRGTVVTGTLERGILKKGDECELLGHSKNIRTVVTGIEMFHKSLERAEAGDNLGALVRGLKREDLRRGLVMVKPGSIKPHQKVEAQVYILSKEEGGRHKPFVSHFMPVMFSLTWDMACRIILPPEKELAMPGEDLKFNLILRQPMILEKGQRFTLRDGNRTIGTGLVTNTLAMTEEEKNIKWG.

Residues 1-46 (MTTMAAATLLRATPHFSGLAAGRTFLLQGLLRLLKAPALPLLCRGL) constitute a mitochondrion transit peptide. In terms of domain architecture, tr-type G spans 58–254 (KPHVNVGTIG…AVDTYIPVPA (197 aa)). The segment at 67–74 (GHVDHGKT) is G1. The GTP site is built by D70, G72, K73, T74, and T75. T74 provides a ligand contact to Mg(2+). Residue K82 is modified to N6-acetyllysine. K91 is modified (N6-acetyllysine; alternate). Residue K91 is modified to N6-succinyllysine; alternate. Positions 108-112 (GITIN) are G2. The interval 129–132 (DCPG) is G3. Residues N184, D187, S222, A223, and L224 each contribute to the GTP site. The interval 184 to 187 (NKAD) is G4. A G5 region spans residues 222–224 (SAL). K237 carries the N6-succinyllysine modification. Position 259 is an N6-acetyllysine (K259). Residue T281 is modified to Phosphothreonine. N6-succinyllysine is present on K289. Residue S315 is modified to Phosphoserine. N6-acetyllysine occurs at positions 364 and 421.

Belongs to the TRAFAC class translation factor GTPase superfamily. Classic translation factor GTPase family. EF-Tu/EF-1A subfamily. Interacts with NLRX1. Interacts with ATG16L1. In terms of assembly, (Microbial infection) Interacts with human parainfluenza virus 3 matrix protein; this interaction inhibits RLR-mediated type I interferon production while promoting autophagy. As to quaternary structure, (Microbial infection) Interacts with Hantaan hantavirus glycoprotein N; this interaction contributes to the virus-induced degradation of mitochondria by autophagy, which leads to degradation of MAVS and inhibition of type I interferon (IFN) responses.

It is found in the mitochondrion. It carries out the reaction GTP + H2O = GDP + phosphate + H(+). GTP hydrolase that promotes the GTP-dependent binding of aminoacyl-tRNA to the A-site of ribosomes during protein biosynthesis. Also plays a role in the regulation of autophagy and innate immunity. Recruits ATG5-ATG12 and NLRX1 at mitochondria and serves as a checkpoint of the RIGI-MAVS pathway. In turn, inhibits RLR-mediated type I interferon while promoting autophagy. This Homo sapiens (Human) protein is Elongation factor Tu, mitochondrial (TUFM).